A 123-amino-acid chain; its full sequence is MKHKRSDKVAETIHTTISTILSRGLNDPRIGFVTITGVEVTDDLHLARIFFTVIGDEAAKKSSEAGLNSAARFIRHELGKVLKMRYTPDILFKYDHSQEYGQRIDDLLREVGTGNDGNDSEDR.

Belongs to the RbfA family. As to quaternary structure, monomer. Binds 30S ribosomal subunits, but not 50S ribosomal subunits or 70S ribosomes.

Its subcellular location is the cytoplasm. Its function is as follows. One of several proteins that assist in the late maturation steps of the functional core of the 30S ribosomal subunit. Associates with free 30S ribosomal subunits (but not with 30S subunits that are part of 70S ribosomes or polysomes). Required for efficient processing of 16S rRNA. May interact with the 5'-terminal helix region of 16S rRNA. The polypeptide is Ribosome-binding factor A (Trichlorobacter lovleyi (strain ATCC BAA-1151 / DSM 17278 / SZ) (Geobacter lovleyi)).